The primary structure comprises 295 residues: Mediator of RNA polymerase II transcription subunit 27 (295 aa).

Belongs to the Mediator complex subunit 27 family. Component of the Mediator complex.

The protein resides in the nucleus. In terms of biological role, component of the Mediator complex, a coactivator involved in the regulated transcription of nearly all RNA polymerase II-dependent genes. Mediator functions as a bridge to convey information from gene-specific regulatory proteins to the basal RNA polymerase II transcription machinery. Mediator is recruited to promoters by direct interactions with regulatory proteins and serves as a scaffold for the assembly of a functional preinitiation complex with RNA polymerase II and the general transcription factors. The polypeptide is Mediator of RNA polymerase II transcription subunit 27 (MED27) (Aedes aegypti (Yellowfever mosquito)).